We begin with the raw amino-acid sequence, 291 residues long: Lipoyl synthase (291 aa).

Cysteine 33, cysteine 38, cysteine 44, cysteine 59, cysteine 63, cysteine 66, and serine 274 together coordinate [4Fe-4S] cluster. The Radical SAM core domain maps to 45–263 (WGEGTATFLI…REAAEAMGFK (219 aa)).

The protein belongs to the radical SAM superfamily. Lipoyl synthase family. The cofactor is [4Fe-4S] cluster.

Its subcellular location is the cytoplasm. The enzyme catalyses [[Fe-S] cluster scaffold protein carrying a second [4Fe-4S](2+) cluster] + N(6)-octanoyl-L-lysyl-[protein] + 2 oxidized [2Fe-2S]-[ferredoxin] + 2 S-adenosyl-L-methionine + 4 H(+) = [[Fe-S] cluster scaffold protein] + N(6)-[(R)-dihydrolipoyl]-L-lysyl-[protein] + 4 Fe(3+) + 2 hydrogen sulfide + 2 5'-deoxyadenosine + 2 L-methionine + 2 reduced [2Fe-2S]-[ferredoxin]. It functions in the pathway protein modification; protein lipoylation via endogenous pathway; protein N(6)-(lipoyl)lysine from octanoyl-[acyl-carrier-protein]: step 2/2. Its function is as follows. Catalyzes the radical-mediated insertion of two sulfur atoms into the C-6 and C-8 positions of the octanoyl moiety bound to the lipoyl domains of lipoate-dependent enzymes, thereby converting the octanoylated domains into lipoylated derivatives. The sequence is that of Lipoyl synthase from Pyrobaculum calidifontis (strain DSM 21063 / JCM 11548 / VA1).